We begin with the raw amino-acid sequence, 620 residues long: PAN2-PAN3 deadenylation complex subunit PAN3 (620 aa).

The segment at 7–36 adopts a C3H1-type zinc-finger fold; it reads SAKGTLCKNILIYGYCKYENKGCAFSHRRN. Disordered regions lie at residues 39 to 73 and 95 to 168; these read ANSG…QPST and VFVP…QPGP. Polar residues-rich tracts occupy residues 63–73 and 101–126; these read NVNTPSFQPST and TPAS…TVSN. Positions 226–482 are pseudokinase domain; the sequence is QSYPGGPEIV…LESYIRKHLA (257 aa). Residues R274, 323 to 330, and 380 to 381 each bind ATP; these read DYYPNAST and SK. Residues 483 to 521 are a coiled coil; sequence IRLLDVVDMLEDSNDYLESQLSTELENARLVRLMTKINF. The interval 522–620 is knob domain; that stretch reads IVDRPEWDNE…SVFRTITRGK (99 aa).

This sequence belongs to the protein kinase superfamily. PAN3 family. Homodimer. Forms a heterotrimer with a catalytic subunit PAN2 to form the poly(A)-nuclease (PAN) deadenylation complex. Interacts (via PAM-2 motif) with poly(A)-binding protein PAB1 (via PABC domain), conferring substrate specificity of the enzyme complex.

Its subcellular location is the cytoplasm. Regulatory subunit of the poly(A)-nuclease (PAN) deadenylation complex, one of two cytoplasmic mRNA deadenylases involved in mRNA turnover. PAN specifically shortens poly(A) tails of RNA and the activity is stimulated by poly(A)-binding protein PAB1. PAN deadenylation is followed by rapid degradation of the shortened mRNA tails by the CCR4-NOT complex. Deadenylated mRNAs are then degraded by two alternative mechanisms, namely exosome-mediated 3'-5' exonucleolytic degradation, or deadenylation-dependent mRNA decaping and subsequent 5'-3' exonucleolytic degradation by XRN1. May also be involved in post-transcriptional maturation of mRNA poly(A) tails. PAN3 acts as a positive regulator for PAN activity, recruiting the catalytic subunit PAN2 to mRNA via its interaction with RNA and with PAB1. This is PAN2-PAN3 deadenylation complex subunit PAN3 from Meyerozyma guilliermondii (strain ATCC 6260 / CBS 566 / DSM 6381 / JCM 1539 / NBRC 10279 / NRRL Y-324) (Yeast).